Reading from the N-terminus, the 367-residue chain is Leu/Ile/Val-binding protein BraC3 (367 aa).

Residues 1–22 form the signal peptide; it reads MTLKTLTATLVASLAFAPLAHA.

This sequence belongs to the leucine-binding protein family. As to quaternary structure, the complex is composed of two ATP-binding proteins (BraF and BraG), two transmembrane proteins (BraD and BraE) and a solute-binding protein (BraC or BraC3).

It localises to the periplasm. Part of the ABC transporter complex BraDEFGC/C3 involved in transport of branched-chain amino acids Leu, Ile and Val (LIV). Essential for the development of bacteroids, the differentiated legume-symbiotic forms of this bacterium, and for the effective N(2) fixation by them. The polypeptide is Leu/Ile/Val-binding protein BraC3 (Rhizobium johnstonii (strain DSM 114642 / LMG 32736 / 3841) (Rhizobium leguminosarum bv. viciae)).